Consider the following 90-residue polypeptide: Large ribosomal subunit protein bL27 (90 aa).

The interval 1–20 (MAHKKAGGSSRNGRDSAGKR) is disordered.

It belongs to the bacterial ribosomal protein bL27 family.

This is Large ribosomal subunit protein bL27 from Rhodopseudomonas palustris (strain ATCC BAA-98 / CGA009).